A 166-amino-acid chain; its full sequence is Large ribosomal subunit protein uL18c (166 aa).

The transit peptide at methionine 1–alanine 44 directs the protein to the chloroplast.

It belongs to the universal ribosomal protein uL18 family. In terms of assembly, component of the chloroplast large ribosomal subunit (LSU). Mature 70S chloroplast ribosomes of higher plants consist of a small (30S) and a large (50S) subunit. The 30S small subunit contains 1 molecule of ribosomal RNA (16S rRNA) and 24 different proteins. The 50S large subunit contains 3 rRNA molecules (23S, 5S and 4.5S rRNA) and 33 different proteins.

It is found in the plastid. The protein resides in the chloroplast. Functionally, component of the chloroplast ribosome (chloro-ribosome), a dedicated translation machinery responsible for the synthesis of chloroplast genome-encoded proteins, including proteins of the transcription and translation machinery and components of the photosynthetic apparatus. This is Large ribosomal subunit protein uL18c (RPL18) from Spinacia oleracea (Spinach).